The primary structure comprises 447 residues: N-succinylarginine dihydrolase (447 aa).

Residues 19–28 (AGLSFGNEAS), Asn110, and 137–138 (HR) each bind substrate. Glu174 is a catalytic residue. Arg212 contributes to the substrate binding site. Residue His248 is part of the active site. The substrate site is built by Asp250 and Asn359. The Nucleophile role is filled by Cys365.

It belongs to the succinylarginine dihydrolase family. Homodimer.

The enzyme catalyses N(2)-succinyl-L-arginine + 2 H2O + 2 H(+) = N(2)-succinyl-L-ornithine + 2 NH4(+) + CO2. It participates in amino-acid degradation; L-arginine degradation via AST pathway; L-glutamate and succinate from L-arginine: step 2/5. Catalyzes the hydrolysis of N(2)-succinylarginine into N(2)-succinylornithine, ammonia and CO(2). The polypeptide is N-succinylarginine dihydrolase (Escherichia coli O9:H4 (strain HS)).